The sequence spans 177 residues: Large ribosomal subunit protein bL19 (177 aa).

The protein belongs to the bacterial ribosomal protein bL19 family.

Its function is as follows. This protein is located at the 30S-50S ribosomal subunit interface and may play a role in the structure and function of the aminoacyl-tRNA binding site. The protein is Large ribosomal subunit protein bL19 of Rhizobium meliloti (strain 1021) (Ensifer meliloti).